A 139-amino-acid polypeptide reads, in one-letter code: Protein FAM237B (139 aa).

The signal sequence occupies residues 1–24 (MCFATRRWFYLHLGCMMLINLVNA). Met-112 is subject to Methionine amide. A propeptide spans 113–139 (GRRQVMPPKYNFPQKITGGNLNVYLRE) (removed in the mature form).

The active form requires C-terminal amidation and disulfide bond formation.

It localises to the secreted. In terms of biological role, may be capable of activating GPR83 via the GNAQ signaling pathway. The polypeptide is Protein FAM237B (Homo sapiens (Human)).